Here is a 241-residue protein sequence, read N- to C-terminus: Large ribosomal subunit protein eL32 (241 aa).

Residues 1-16 show a composition bias toward acidic residues; sequence MADNEEDVEAEEEYTE. Disordered regions lie at residues 1-47 and 68-182; these read MADN…GADQ and VGGL…HPSG. The segment covering 29 to 44 has biased composition (basic and acidic residues); that stretch reads ESLREAGFESVEDVRG. Residues 73-96 show a composition bias toward acidic residues; sequence VESETEAEVEEEGGEEAPDEDVET. Residues 103 to 116 are compositionally biased toward basic and acidic residues; the sequence is LTEKTPDLSDEDAR. Residues 133–159 show a composition bias toward basic residues; that stretch reads DHHKKKRVSTSWRKPRGQLSKQRRGIK.

The protein belongs to the eukaryotic ribosomal protein eL32 family. Part of the 50S ribosomal subunit. Interacts weakly with protein L15.

Binds to the 23S rRNA. This chain is Large ribosomal subunit protein eL32 (rpl32e), found in Haloarcula marismortui (strain ATCC 43049 / DSM 3752 / JCM 8966 / VKM B-1809) (Halobacterium marismortui).